The primary structure comprises 487 residues: Glutamate--tRNA ligase 2 (487 aa).

Positions 24–34 (PSPTGFLHIGG) match the 'HIGH' region motif. The 'KMSKS' region motif lies at 258–262 (KLSKR). Lys261 contacts ATP.

The protein belongs to the class-I aminoacyl-tRNA synthetase family. Glutamate--tRNA ligase type 1 subfamily. As to quaternary structure, monomer.

The protein localises to the cytoplasm. The catalysed reaction is tRNA(Glu) + L-glutamate + ATP = L-glutamyl-tRNA(Glu) + AMP + diphosphate. Its function is as follows. Catalyzes the attachment of glutamate to tRNA(Glu) in a two-step reaction: glutamate is first activated by ATP to form Glu-AMP and then transferred to the acceptor end of tRNA(Glu). The polypeptide is Glutamate--tRNA ligase 2 (Novosphingobium aromaticivorans (strain ATCC 700278 / DSM 12444 / CCUG 56034 / CIP 105152 / NBRC 16084 / F199)).